The chain runs to 333 residues: Endo-1,4-beta-xylanase (333 aa).

An N-terminal signal peptide occupies residues 1-17 (MYLVAFMLLAILPTGYC). In terms of domain architecture, GH10 spans 18–330 (QLNTLAVRAG…KPAYQGIVDG (313 aa)). The Proton donor role is filled by Glu-147. The active-site Nucleophile is the Glu-252.

The protein belongs to the glycosyl hydrolase 10 (cellulase F) family.

It is found in the secreted. The catalysed reaction is Endohydrolysis of (1-&gt;4)-beta-D-xylosidic linkages in xylans.. The protein operates within glycan degradation; xylan degradation. Functionally, has xylanase activity. Seems to be involved in the release of sugars from the hemicellulolytic fraction in the compost. The chain is Endo-1,4-beta-xylanase (xlnA) from Agaricus bisporus (White button mushroom).